The following is a 3291-amino-acid chain: Protocadherin-16 (3291 aa).

The N-terminal stretch at 1-35 (MQEELSVALSCPGMKSLGTLLPLLVLLGTTVPGIR) is a signal peptide. Residues 36-2933 (GQAGSLDLQI…PDLNLLLVGA (2898 aa)) lie on the Extracellular side of the membrane. 27 Cadherin domains span residues 37 to 137 (QAGS…APAF), 138 to 249 (PQAR…APAF), 250 to 356 (NQSR…QPSM), 369 to 466 (VSEA…APAF), 476 to 572 (LPEV…EPQF), 573 to 679 (QRTF…PPQF), 680 to 784 (YPRE…PPIF), 785 to 888 (EQLQ…SPAF), 889 to 994 (PAPE…APRF), 995 to 1105 (DSPT…EPTF), 1100 to 1205 (SEEP…SPTF), 1218 to 1317 (IQVP…SPDL), 1326 to 1429 (VPVV…APAF), 1430 to 1539 (ARDP…APVF), 1539 to 1642 (FASP…APAF), 1643 to 1744 (PQQE…SPTF), 1745 to 1848 (GNTH…APAF), 1849 to 1953 (PVPS…APAF), 1976 to 2061 (LATL…GPRF), 2062 to 2164 (PRAN…APRF), 2165 to 2270 (LQPH…RPTI), 2270 to 2369 (IPQP…VPIF), 2370 to 2475 (SQSL…APSF), 2476 to 2595 (TLPH…PPVF), 2596 to 2699 (TRAS…GPAF), 2700 to 2806 (PLSL…DPVF), and 2807 to 2926 (LAPS…APDL). N396 carries N-linked (GlcNAc...) asparagine glycosylation. Residues 951 to 971 (GPPGGPPHELEVEAQDGGSPP) are disordered. N1711 is a glycosylation site (N-linked (GlcNAc...) asparagine). N2354 carries an N-linked (GlcNAc...) asparagine glycan. The N-linked (GlcNAc...) asparagine glycan is linked to N2562. Residues 2934 to 2954 (VAASLGVVVVLALAALVLGLV) form a helical membrane-spanning segment. At 2955 to 3291 (RARSRKAEAA…EPPDDTELRI (337 aa)) the chain is on the cytoplasmic side. The segment at 2978-3033 (SLQKLGREPPSPPPSEHLYHQTLPSYGGPGAGGPYPRGGSLDPSHSSGRGSAEAAE) is disordered. Residues 3004–3013 (GGPGAGGPYP) are compositionally biased toward gly residues. S3048 carries the phosphoserine modification. Disordered stretches follow at residues 3051–3080 (SSLAARGPDSGIQQDADGLSDTSCEPPAPD) and 3226–3291 (ASHR…ELRI). Positions 3237-3259 (SLSSAAMSPSFSPSLSPLAARSP) are enriched in low complexity. Residues 3270 to 3279 (PSASALSTES) are compositionally biased toward polar residues.

As to quaternary structure, heterophilic interaction with FAT4; this interaction affects their respective protein levels.

The protein localises to the cell membrane. In terms of biological role, calcium-dependent cell-adhesion protein. Mediates functions in neuroprogenitor cell proliferation and differentiation. The sequence is that of Protocadherin-16 (Dchs1) from Rattus norvegicus (Rat).